A 316-amino-acid chain; its full sequence is tRNA dimethylallyltransferase (316 aa).

17–24 contributes to the ATP binding site; the sequence is GPTASGKT. 19–24 serves as a coordination point for substrate; that stretch reads TASGKT. 3 interaction with substrate tRNA regions span residues 42-45, 166-170, and 247-252; these read DSAL, QRLSR, and RCVGYR.

This sequence belongs to the IPP transferase family. In terms of assembly, monomer. Requires Mg(2+) as cofactor.

It catalyses the reaction adenosine(37) in tRNA + dimethylallyl diphosphate = N(6)-dimethylallyladenosine(37) in tRNA + diphosphate. In terms of biological role, catalyzes the transfer of a dimethylallyl group onto the adenine at position 37 in tRNAs that read codons beginning with uridine, leading to the formation of N6-(dimethylallyl)adenosine (i(6)A). This is tRNA dimethylallyltransferase from Salmonella enteritidis PT4 (strain P125109).